We begin with the raw amino-acid sequence, 2997 residues long: Chromodomain-helicase-DNA-binding protein 7 (2997 aa).

Residues 86–144 (PNRMMSNTPGNGLASPHSQYHTPPVPQVPHGGSGGGQMGVYPGMQNERHGQSFVDSSSM) form a disordered region. The segment covering 88–106 (RMMSNTPGNGLASPHSQYH) has biased composition (polar residues). Omega-N-methylarginine is present on arginine 148. Disordered regions lie at residues 160–186 (YQQQ…PQHM), 199–287 (SMQQ…AVRP), 375–419 (QMNT…GSAG), 498–816 (GQQH…KQKE), and 938–959 (REPE…SESS). Over residues 166–177 (QPQPPQPAPSGP) the composition is skewed to pro residues. 2 stretches are compositionally biased toward polar residues: residues 199-224 (SMQQ…NQGN) and 238-255 (VPQQ…SVQQ). Residue arginine 286 is modified to Asymmetric dimethylarginine. Over residues 375–390 (QMNTQTMHPSQPQGTY) the composition is skewed to polar residues. Residues 498–510 (GQQHPGQQPSFQQ) are compositionally biased toward low complexity. Basic and acidic residues predominate over residues 607 to 620 (VAEDPSKGFGKDDF). Positions 627 to 636 (QELNRNSLDG) are enriched in polar residues. Residue serine 637 is modified to Phosphoserine. 2 stretches are compositionally biased toward basic and acidic residues: residues 650–682 (KKDP…EPKE) and 717–729 (GKTE…DLDK). Serine 725 bears the Phosphoserine mark. Residues 746-758 (QKRRSSRQVKRKR) are compositionally biased toward basic residues. Residues 759–769 (YTEDLEFKISD) are compositionally biased toward basic and acidic residues. Residues 782–794 (SPSNTSQSEQQES) show a composition bias toward polar residues. 2 Chromo domains span residues 800–867 (PVVE…GQNK) and 882–947 (VEVD…RVER). The region spanning 980–1154 (LFNWYNMRNC…FSLLHFLEPS (175 aa)) is the Helicase ATP-binding domain. 993–1000 (DEMGLGKT) contacts ATP. A DEAH box motif is present at residues 1105–1108 (DEAH). The Helicase C-terminal domain occupies 1294 to 1464 (LIDKLLPKLK…LSKKEIEDLL (171 aa)). Disordered stretches follow at residues 1576–1600 (FSDL…KSQG) and 1837–1863 (DMLA…TRTP). Phosphoserine occurs at positions 1577 and 1581. Residues 1584-1596 (EEKPCAKPRRPQD) show a composition bias toward basic and acidic residues. Over residues 1844 to 1855 (DGGEFDREDEDP) the composition is skewed to acidic residues. Phosphoserine is present on serine 1874. Composition is skewed to basic and acidic residues over residues 2170–2189 (QAEG…KCEG) and 2198–2207 (GSGKESKQEC). The disordered stretch occupies residues 2170–2290 (QAEGKVEEPE…DETRDGFYME (121 aa)). 8 positions are modified to phosphoserine: serine 2231, serine 2233, serine 2237, serine 2251, serine 2272, serine 2275, serine 2356, and serine 2395. A compositionally biased stretch (acidic residues) spans 2237–2251 (SEEDEEEKLEDDDKS). The stretch at 2401 to 2431 (RRRRRKIEIEAERAAKRRNLMEMVAQLRESQ) forms a coiled coil. Phosphothreonine is present on threonine 2472. 2 positions are modified to phosphoserine: serine 2533 and serine 2535. Threonine 2551 bears the Phosphothreonine mark. 2 positions are modified to phosphoserine: serine 2559 and serine 2619. A compositionally biased stretch (low complexity) spans 2823 to 2832 (ATGNTTTASS). Disordered regions lie at residues 2823–2872 (ATGN…SANG) and 2935–2997 (EEKA…ENDE). 2 stretches are compositionally biased toward basic and acidic residues: residues 2839–2849 (STSKGEEKGNE) and 2935–2951 (EEKA…KDGE). A phosphoserine mark is found at serine 2956 and serine 2961. Residues 2970-2997 (LLEDEIAQGEELDSLDGGDEIENNENDE) are compositionally biased toward acidic residues.

Belongs to the SNF2/RAD54 helicase family. May interact with CTCF. Interacts with CHD8. Interacts with FAM124B. Found in a complex composed of AGO2, CHD7 and ARB2A. Interacts with TLK2. As to expression, widely expressed in fetal and adult tissues.

The protein localises to the nucleus. The protein resides in the nucleolus. The enzyme catalyses ATP + H2O = ADP + phosphate + H(+). ATP-dependent chromatin-remodeling factor, slides nucleosomes along DNA; nucleosome sliding requires ATP. Probable transcription regulator. May be involved in the in 45S precursor rRNA production. The chain is Chromodomain-helicase-DNA-binding protein 7 (CHD7) from Homo sapiens (Human).